The chain runs to 359 residues: Phospho-N-acetylmuramoyl-pentapeptide-transferase (359 aa).

A run of 10 helical transmembrane segments spans residues 3–23 (QILVAVTVALVVSILLTPALI), 55–75 (VAIVAGIWAGYLGTHLAGLAF), 80–100 (VSASGVLVLGLATALGGVGFL), 117–137 (TAKTVGQITAAVLFGVLVLQF), 156–176 (IATVTLAPALFVLFCMVIVSA), 187–207 (LDGLAAGSMAMVTAAYVLITF), 231–251 (LTLIAAATVGACIGFLWWNAA), 255–275 (IFMGDTGSLALGGVIAGLSVT), 280–300 (ILAVVLGSLFVAEITSVVLQI), and 334–354 (FWLLTAIACGLGVVLFYGEWL).

This sequence belongs to the glycosyltransferase 4 family. MraY subfamily. It depends on Mg(2+) as a cofactor.

The protein localises to the cell membrane. The enzyme catalyses UDP-N-acetyl-alpha-D-muramoyl-L-alanyl-gamma-D-glutamyl-meso-2,6-diaminopimeloyl-D-alanyl-D-alanine + di-trans,octa-cis-undecaprenyl phosphate = di-trans,octa-cis-undecaprenyl diphospho-N-acetyl-alpha-D-muramoyl-L-alanyl-D-glutamyl-meso-2,6-diaminopimeloyl-D-alanyl-D-alanine + UMP. Its pathway is cell wall biogenesis; peptidoglycan biosynthesis. Its function is as follows. Catalyzes the initial step of the lipid cycle reactions in the biosynthesis of the cell wall peptidoglycan: transfers peptidoglycan precursor phospho-MurNAc-pentapeptide from UDP-MurNAc-pentapeptide onto the lipid carrier undecaprenyl phosphate, yielding undecaprenyl-pyrophosphoryl-MurNAc-pentapeptide, known as lipid I. The sequence is that of Phospho-N-acetylmuramoyl-pentapeptide-transferase from Mycobacterium leprae (strain TN).